Here is a 376-residue protein sequence, read N- to C-terminus: UDP-N-acetylglucosamine 2-epimerase (376 aa).

Substrate is bound by residues R10, K15, D95, E117, H213, Q271, F276, 290-292, E296, and R313; that span reads SGG.

This sequence belongs to the UDP-N-acetylglucosamine 2-epimerase family. In terms of assembly, homodimer.

It is found in the cytoplasm. It carries out the reaction UDP-N-acetyl-alpha-D-glucosamine = UDP-N-acetyl-alpha-D-mannosamine. It participates in bacterial outer membrane biogenesis; enterobacterial common antigen biosynthesis. Its activity is regulated as follows. Allosterically activated by its substrate, UDP-GlcNAc. In terms of biological role, catalyzes the reversible epimerization at C-2 of UDP-N-acetylglucosamine (UDP-GlcNAc) and thereby provides bacteria with UDP-N-acetylmannosamine (UDP-ManNAc), the activated donor of ManNAc residues. Also involved in bacteriophage N4 adsorption. The protein is UDP-N-acetylglucosamine 2-epimerase of Escherichia coli (strain K12).